Consider the following 557-residue polypeptide: MSNPRHNEREVRSPRGDELNAKSWLTEAPLRMLMNNLDPDVAERPHELVVYGGIGRAARTWDDFDRIVATLKTLNDDETLLVQSGKPVGVFRTHKDAPRVLIANSNLVPHWANWDHFNELDKKGLAMYGQMTAGSWIYIGAQGIVQGTYETFVEAGRQHYGGNLKGRWILTGGLGGMGGAQPLAAVMAGACCLAVECDETRADFRLRTRYVDEKTHSLDEALAKIDAWTKAGEAKSIALIGNAAEIFPELVKRGVKPDIVTDQTSAHDPVHGYLPLGWTVAEWRAKQENDPKAVEKAARASMKVQVQAMLDFWNAGIPTVDYGNNIRQMALEEGLENAFAFPGFVPAYIRPLFCRGIGPFRWAALSGDPEDIAKTDAKVKELLPDNKHLHNWLDMAKERIAFQGLPARICWVGLGDRHRLGLAFNEMVRNGELKAPIVIGRDHLDSGSVASPNRKTEAMKDGSDAVSDWPLLNALLNTASGATWVSLHHGGGVGMGFSQHAGMVICCDGTEDADRRLERVLWNDPATGVMRHADAGYDIALDWARKQGLRLPAILGN.

The segment at 1-20 is disordered; sequence MSNPRHNEREVRSPRGDELN. NAD(+)-binding positions include 52–53, Gln130, 176–178, Glu196, Arg201, 242–243, 263–267, 273–274, and Tyr322; these read GG, GMG, NA, QTSAH, and YL. Residue Cys410 is part of the active site. Gly492 provides a ligand contact to NAD(+).

The protein belongs to the urocanase family. It depends on NAD(+) as a cofactor.

It is found in the cytoplasm. It carries out the reaction 4-imidazolone-5-propanoate = trans-urocanate + H2O. Its pathway is amino-acid degradation; L-histidine degradation into L-glutamate; N-formimidoyl-L-glutamate from L-histidine: step 2/3. Catalyzes the conversion of urocanate to 4-imidazolone-5-propionate. The polypeptide is Urocanate hydratase (Brucella melitensis biotype 2 (strain ATCC 23457)).